Consider the following 474-residue polypeptide: ATP synthase subunit beta (474 aa).

An ATP-binding site is contributed by 153–160; the sequence is GGAGVGKT.

Belongs to the ATPase alpha/beta chains family. In terms of assembly, F-type ATPases have 2 components, CF(1) - the catalytic core - and CF(0) - the membrane proton channel. CF(1) has five subunits: alpha(3), beta(3), gamma(1), delta(1), epsilon(1). CF(0) has three main subunits: a(1), b(2) and c(9-12). The alpha and beta chains form an alternating ring which encloses part of the gamma chain. CF(1) is attached to CF(0) by a central stalk formed by the gamma and epsilon chains, while a peripheral stalk is formed by the delta and b chains.

The protein resides in the cell inner membrane. The catalysed reaction is ATP + H2O + 4 H(+)(in) = ADP + phosphate + 5 H(+)(out). Its function is as follows. Produces ATP from ADP in the presence of a proton gradient across the membrane. The catalytic sites are hosted primarily by the beta subunits. The chain is ATP synthase subunit beta from Neorickettsia sennetsu (strain ATCC VR-367 / Miyayama) (Ehrlichia sennetsu).